We begin with the raw amino-acid sequence, 526 residues long: Rho guanine nucleotide exchange factor 3 (526 aa).

A disordered region spans residues 20-40; sequence ELPPASGPAKDAEEPSNKRVK. Ser47 and Ser70 each carry phosphoserine. The DH domain occupies 122–304; that stretch reads KRQEAIFELS…QGIVAEINTK (183 aa). One can recognise a PH domain in the interval 291–449; sequence INIIQGIVAE…WLNCIRQAKE (159 aa). A disordered region spans residues 464–526; that stretch reads EGSFLNPTTG…GNSRHGESNV (63 aa). Residues 466–475 show a composition bias toward polar residues; that stretch reads SFLNPTTGSR.

As to quaternary structure, interacts with RHOA and RHOB. In terms of tissue distribution, widely expressed. Highest levels are found in adult brain and skeletal muscle. Lower levels are found in heart and kidney.

Its subcellular location is the cytoplasm. Acts as a guanine nucleotide exchange factor (GEF) for RhoA and RhoB GTPases. The polypeptide is Rho guanine nucleotide exchange factor 3 (ARHGEF3) (Homo sapiens (Human)).